The sequence spans 357 residues: UDP-arabinopyranose mutase 1 (357 aa).

V2 bears the N-acetylvaline mark. The short motif at 110-112 (DDD) is the DXD motif element. R158 is a glycosylation site (N-linked (Glc...) arginine).

This sequence belongs to the RGP family. As to quaternary structure, heteromers with RGP2, RGP3, RGP4 and RGP5. Mn(2+) is required as a cofactor. Requires Mg(2+) as cofactor. Reversibly glycosylated in vitro by UDP-glucose, UDP-xylose and UDP-galactose, but not UDP-mannose. As to expression, predominantly expressed in shoot and root apical meristems. Expressed in epidermal cells of leaves, inflorescence stems and seed coat. Expressed in pollen.

It is found in the cytoplasm. The protein resides in the cytosol. Its subcellular location is the golgi apparatus. It catalyses the reaction UDP-beta-L-arabinofuranose = UDP-beta-L-arabinopyranose. Its function is as follows. UDP-L-arabinose mutase involved in the biosynthesis of cell wall non-cellulosic polysaccharides. Catalyzes the interconvertion of UDP-L-arabinopyranose (UDP-Arap) and UDP-L-arabinofuranose (UDP-Araf) in vitro. Preferentially catalyzes the formation of UDP-Arap from UDP-Araf. At thermodynamic equilibrium in vitro the ratio of the pyranose form over the furanose form is 95:5. Is not active on other UDP-sugars (UDP-Gal, UDP-Xyl, UDP-Glc, GDP-Man and GDP-Fuc). Functions redundantly with RGP2 and is essential for proper cell walls and pollen development. Probably involved in the formation of the pectocellulosic cell wall layer intine. Is probably active as heteromer in vivo. The polypeptide is UDP-arabinopyranose mutase 1 (Arabidopsis thaliana (Mouse-ear cress)).